The primary structure comprises 296 residues: Phosphatidylglycerol--prolipoprotein diacylglyceryl transferase (296 aa).

Residues 1–21 (MRHRRRPGGRSTAGGTPVSQL) form a disordered region. The next 7 helical transmembrane spans lie at 34-54 (GPLTIHIYALCILAGIVVAYI), 72-92 (ELCALAVIAGIIGGRLYHVIT), 108-128 (FFIWQGGLGIWGAISLGGLAI), 136-158 (GIRFASVADSLAPGILAAQAIGR), 195-215 (FHPTFLYELVWSLVGAVFLLW), 227-243 (LFTLYVAIYTFGRFWVE), and 258-278 (LNDVTALVVFTGAVVILIVLQ). Residue R158 coordinates a 1,2-diacyl-sn-glycero-3-phospho-(1'-sn-glycerol).

It belongs to the Lgt family.

The protein localises to the cell membrane. It carries out the reaction L-cysteinyl-[prolipoprotein] + a 1,2-diacyl-sn-glycero-3-phospho-(1'-sn-glycerol) = an S-1,2-diacyl-sn-glyceryl-L-cysteinyl-[prolipoprotein] + sn-glycerol 1-phosphate + H(+). It functions in the pathway protein modification; lipoprotein biosynthesis (diacylglyceryl transfer). In terms of biological role, catalyzes the transfer of the diacylglyceryl group from phosphatidylglycerol to the sulfhydryl group of the N-terminal cysteine of a prolipoprotein, the first step in the formation of mature lipoproteins. This is Phosphatidylglycerol--prolipoprotein diacylglyceryl transferase from Cutibacterium acnes (strain DSM 16379 / KPA171202) (Propionibacterium acnes).